Consider the following 319-residue polypeptide: Beta-ketoacyl-[acyl-carrier-protein] synthase III (319 aa).

Residues Cys-112 and His-246 contribute to the active site. Residues 247 to 251 (QANFR) form an ACP-binding region. Asn-276 is a catalytic residue.

It belongs to the thiolase-like superfamily. FabH family. Homodimer.

The protein resides in the cytoplasm. The catalysed reaction is malonyl-[ACP] + acetyl-CoA + H(+) = 3-oxobutanoyl-[ACP] + CO2 + CoA. Its pathway is lipid metabolism; fatty acid biosynthesis. In terms of biological role, catalyzes the condensation reaction of fatty acid synthesis by the addition to an acyl acceptor of two carbons from malonyl-ACP. Catalyzes the first condensation reaction which initiates fatty acid synthesis and may therefore play a role in governing the total rate of fatty acid production. Possesses both acetoacetyl-ACP synthase and acetyl transacylase activities. Its substrate specificity determines the biosynthesis of branched-chain and/or straight-chain of fatty acids. The chain is Beta-ketoacyl-[acyl-carrier-protein] synthase III from Shewanella oneidensis (strain ATCC 700550 / JCM 31522 / CIP 106686 / LMG 19005 / NCIMB 14063 / MR-1).